Consider the following 177-residue polypeptide: MANLWEDLETGPDAPDVIYAVVECLKGERNKYEYDKDIPGVVLDRVLHSNVHYPSDYGFIPQSYYDDGDPFDVLVLVEDQTFPGCVIEARPVALMEMDDDGEQDDKVIAVPEEDPRYDDVEDVDDLTDQQKAEIAEFFETYKNLEADKETAVLGWGDAQAAKDAIEHAQDLYDEQFA.

Substrate contacts are provided by K31, R45, and Y57. 3 residues coordinate Mg(2+): D67, D72, and D104. Residue Y141 participates in substrate binding.

It belongs to the PPase family. In terms of assembly, homohexamer. It depends on Mg(2+) as a cofactor.

The protein localises to the cytoplasm. It carries out the reaction diphosphate + H2O = 2 phosphate + H(+). Its function is as follows. Catalyzes the hydrolysis of inorganic pyrophosphate (PPi) forming two phosphate ions. This Halobacterium salinarum (strain ATCC 700922 / JCM 11081 / NRC-1) (Halobacterium halobium) protein is Inorganic pyrophosphatase.